Here is a 597-residue protein sequence, read N- to C-terminus: Elongation factor 4 (597 aa).

Positions 2–184 (QHIRNFSIIA…AVISRIPPPK (183 aa)) constitute a tr-type G domain. Residues 14–19 (DHGKST) and 131–134 (NKID) contribute to the GTP site.

This sequence belongs to the TRAFAC class translation factor GTPase superfamily. Classic translation factor GTPase family. LepA subfamily.

The protein localises to the cell inner membrane. It carries out the reaction GTP + H2O = GDP + phosphate + H(+). In terms of biological role, required for accurate and efficient protein synthesis under certain stress conditions. May act as a fidelity factor of the translation reaction, by catalyzing a one-codon backward translocation of tRNAs on improperly translocated ribosomes. Back-translocation proceeds from a post-translocation (POST) complex to a pre-translocation (PRE) complex, thus giving elongation factor G a second chance to translocate the tRNAs correctly. Binds to ribosomes in a GTP-dependent manner. The polypeptide is Elongation factor 4 (Nitrosospira multiformis (strain ATCC 25196 / NCIMB 11849 / C 71)).